The sequence spans 397 residues: Nuclear pore complex-interacting protein family member B2 (397 aa).

The disordered stretch occupies residues 256-397 (NRMGHQPPPP…KLRTGHCTQA (142 aa)). The segment covering 267–277 (QQHSITDNSLS) has biased composition (polar residues). Residues 278–287 (LKTPPECLLT) are compositionally biased toward low complexity. The segment covering 382–391 (KRRRLSKLRT) has biased composition (basic residues).

Belongs to the NPIP family.

Its subcellular location is the nucleus. This chain is Nuclear pore complex-interacting protein family member B2, found in Homo sapiens (Human).